The primary structure comprises 339 residues: Ketol-acid reductoisomerase (NADP(+)) (339 aa).

Residues 1-182 (MRVYYDRDAD…GGGRSGVIET (182 aa)) enclose the KARI N-terminal Rossmann domain. NADP(+)-binding positions include 24-27 (YGSQ), Arg48, Ser51, Thr53, and 83-86 (DELQ). The active site involves His108. Gly134 serves as a coordination point for NADP(+). In terms of domain architecture, KARI C-terminal knotted spans 183–328 (TFKEECETDL…GKLRAMMPWI (146 aa)). Positions 191, 195, 227, and 231 each coordinate Mg(2+). Ser252 provides a ligand contact to substrate.

The protein belongs to the ketol-acid reductoisomerase family. It depends on Mg(2+) as a cofactor.

It carries out the reaction (2R)-2,3-dihydroxy-3-methylbutanoate + NADP(+) = (2S)-2-acetolactate + NADPH + H(+). The enzyme catalyses (2R,3R)-2,3-dihydroxy-3-methylpentanoate + NADP(+) = (S)-2-ethyl-2-hydroxy-3-oxobutanoate + NADPH + H(+). It functions in the pathway amino-acid biosynthesis; L-isoleucine biosynthesis; L-isoleucine from 2-oxobutanoate: step 2/4. Its pathway is amino-acid biosynthesis; L-valine biosynthesis; L-valine from pyruvate: step 2/4. Involved in the biosynthesis of branched-chain amino acids (BCAA). Catalyzes an alkyl-migration followed by a ketol-acid reduction of (S)-2-acetolactate (S2AL) to yield (R)-2,3-dihydroxy-isovalerate. In the isomerase reaction, S2AL is rearranged via a Mg-dependent methyl migration to produce 3-hydroxy-3-methyl-2-ketobutyrate (HMKB). In the reductase reaction, this 2-ketoacid undergoes a metal-dependent reduction by NADPH to yield (R)-2,3-dihydroxy-isovalerate. In Brucella melitensis biotype 2 (strain ATCC 23457), this protein is Ketol-acid reductoisomerase (NADP(+)).